We begin with the raw amino-acid sequence, 498 residues long: Aspartyl/glutamyl-tRNA(Asn/Gln) amidotransferase subunit B (498 aa).

The protein belongs to the GatB/GatE family. GatB subfamily. Heterotrimer of A, B and C subunits.

It carries out the reaction L-glutamyl-tRNA(Gln) + L-glutamine + ATP + H2O = L-glutaminyl-tRNA(Gln) + L-glutamate + ADP + phosphate + H(+). The enzyme catalyses L-aspartyl-tRNA(Asn) + L-glutamine + ATP + H2O = L-asparaginyl-tRNA(Asn) + L-glutamate + ADP + phosphate + 2 H(+). In terms of biological role, allows the formation of correctly charged Asn-tRNA(Asn) or Gln-tRNA(Gln) through the transamidation of misacylated Asp-tRNA(Asn) or Glu-tRNA(Gln) in organisms which lack either or both of asparaginyl-tRNA or glutaminyl-tRNA synthetases. The reaction takes place in the presence of glutamine and ATP through an activated phospho-Asp-tRNA(Asn) or phospho-Glu-tRNA(Gln). The chain is Aspartyl/glutamyl-tRNA(Asn/Gln) amidotransferase subunit B from Erythrobacter litoralis (strain HTCC2594).